Reading from the N-terminus, the 1228-residue chain is AT-rich interactive domain-containing protein 4B (1228 aa).

Disordered stretches follow at residues 123–167 and 266–307; these read LPLT…DDRK and KTEL…PFPE. Phosphoserine is present on residues S276, S295, and S296. A compositionally biased stretch (acidic residues) spans 277–305; it reads EAEEEEEEEDDEKEKEDNSSEEEEEIEPF. The region spanning 306-398 is the ARID domain; the sequence is PEERENFLQQ…YLYGFEEYCR (93 aa). Residues K428 and K461 each participate in a glycyl lysine isopeptide (Lys-Gly) (interchain with G-Cter in SUMO2) cross-link. The segment covering 437 to 464 has biased composition (basic and acidic residues); the sequence is EVNVEDSKNMIPKEETPAEDESERKENI. Disordered regions lie at residues 437–466, 479–525, 539–606, 620–802, 825–1129, and 1168–1204; these read EVNV…NIKP, PAQS…EQAR, RPAD…SDTG, LQAS…EEKR, LNNS…RLPK, and SEVA…SITA. The residue at position 482 (S482) is a Phosphoserine. Positions 483 to 511 are enriched in basic and acidic residues; that stretch reads DQEKEANITKLEEKESLEDKDGATARAEE. Over residues 546–555 the composition is skewed to basic residues; sequence PKIKHRKKIK. Residues 556 to 569 are compositionally biased toward basic and acidic residues; it reads NKLDKEKDRDEKYS. S579, S581, and S588 each carry phosphoserine. The segment covering 596 to 606 has biased composition (basic and acidic residues); sequence DLADAKNSDTG. Residue S630 is modified to Phosphoserine. Basic and acidic residues-rich tracts occupy residues 635–667 and 691–700; these read ERCA…KEEL and SPERLRKDVE. A Glycyl lysine isopeptide (Lys-Gly) (interchain with G-Cter in SUMO2) cross-link involves residue K664. 2 positions are modified to phosphoserine: S691 and S703. The segment covering 701–713 has biased composition (acidic residues); that stretch reads AISEDTDFEEEDE. At T706 the chain carries Phosphothreonine. Residues 721-730 are compositionally biased toward basic and acidic residues; that stretch reads VKKDTTDKAL. The segment covering 744–753 has biased composition (polar residues); it reads IQTNCLQSGS. Composition is skewed to basic and acidic residues over residues 755–765, 825–843, and 911–926; these read GKKEDRTKSKE, LNNS…RKDV, and KPVE…RKTE. Residues 927 to 937 show a composition bias toward polar residues; it reads FPSSGSNSVLN. The residue at position 930 (S930) is a Phosphoserine. Position 942 is a phosphothreonine (T942). Positions 944-965 are enriched in low complexity; sequence ESPSSVTVTETSQQQSSVTVSV. The residue at position 945 (S945) is a Phosphoserine. Positions 972–981 are enriched in basic and acidic residues; the sequence is EEVRSIKSET. Residues 1003–1017 are compositionally biased toward low complexity; it reads SSPAGFNASVSSSSS. A compositionally biased stretch (basic residues) spans 1046–1064; that stretch reads KKQKRSHKATVVNNKKKGK. A Phosphothreonine modification is found at T1066. Residues S1068, S1069, S1071, and S1075 each carry the phosphoserine modification. The span at 1112-1124 shows a compositional bias: basic and acidic residues; sequence KNGDKDPDLKEPS. The stretch at 1141–1186 forms a coiled coil; it reads ENMTSAERISILQEKLQEIRKHYLSLKSEVASIDRRRKRLKKKERE. Residues 1188–1204 are compositionally biased toward low complexity; it reads AATSSSSSSPSSSSITA.

In terms of assembly, component of a Sin3A corepressor complex consisting of SIN3A, SAP130, SUDS3/SAP45, SAP180, HDAC1 and HDAC2. Interacts with ARID4A. Interacts with AR.

Its subcellular location is the nucleus. Functionally, acts as a transcriptional repressor. May function in the assembly and/or enzymatic activity of the Sin3A corepressor complex or in mediating interactions between the complex and other regulatory complexes. Plays a role in the regulation of epigenetic modifications at the PWS/AS imprinting center near the SNRPN promoter, where it might function as part of a complex with RB1 and ARID4A. Involved in spermatogenesis, together with ARID4A, where it functions as a transcriptional coactivator for AR (androgen receptor) and enhances expression of genes required for sperm maturation. Regulates expression of the tight junction protein CLDN3 in the testis, which is important for integrity of the blood-testis barrier. Plays a role in myeloid homeostasis where it regulates the histone methylation state of bone marrow cells and expression of various genes involved in hematopoiesis. May function as a leukemia suppressor. The chain is AT-rich interactive domain-containing protein 4B (Arid4b) from Rattus norvegicus (Rat).